Here is a 203-residue protein sequence, read N- to C-terminus: Small ribosomal subunit protein uS2 (203 aa).

It belongs to the universal ribosomal protein uS2 family.

This is Small ribosomal subunit protein uS2 from Methanoregula boonei (strain DSM 21154 / JCM 14090 / 6A8).